The chain runs to 405 residues: MDKSKENCIAGPVKTAIALGDGPKRVLVTQQVPSQNPLSANSGQAQRVLCPSNSSQRVPPQTQKLVSSHKPAQNLKQKQLQATGVPRPASRSLNNTQKSEQPSSSAPGNNSEKELATKQKNEESKKRQWALEDFEIGRPLGKGKFGNVYLAREKQSKFILAIKVLFKAQLEKAGVEHQLRREVEIQSHLRHPNILRLYGYFHDATRVYLILEYAPLGAVYRELQKLSKFDEQRTATYITELADALSYCHSKRVIHRDIKPENLLLGSAGELKIADFGWSVHAPSSRRTTLCGTLDYLPPEMIEGRMHDEKVDLWSLGVLCYEFLVGKPPFEASTYQETYKRISRVEFTFPDFVPEGARDLISRLLKHNPSQRPTLKDVLEHPWIMANSSKPSSSQKSKDSTSKQS.

Composition is skewed to polar residues over residues 32-82 and 91-110; these read VPSQ…QLQA and RSLN…PGNN. The disordered stretch occupies residues 32 to 127; the sequence is VPSQNPLSAN…KQKNEESKKR (96 aa). A phosphoserine mark is found at Ser42 and Ser52. Residues 111–127 are compositionally biased toward basic and acidic residues; it reads SEKELATKQKNEESKKR. One can recognise a Protein kinase domain in the interval 134-384; the sequence is FEIGRPLGKG…LKDVLEHPWI (251 aa). ATP-binding positions include Lys144, Lys163, and 212–214; that span reads EYA. The Proton acceptor role is filled by Asp257. Lys259 participates in a covalent cross-link: Glycyl lysine isopeptide (Lys-Gly) (interchain with G-Cter in SUMO2). ATP-binding positions include 261–262 and Asp275; that span reads EN. Residues 281–294 form an activation segment region; it reads HAPSSRRTTLCGTL. Phosphothreonine is present on residues Thr288 and Thr289. Position 343 is a phosphoserine (Ser343). The interval 385 to 405 is disordered; it reads MANSSKPSSSQKSKDSTSKQS. Residues 396 to 405 show a composition bias toward basic and acidic residues; the sequence is KSKDSTSKQS.

Belongs to the protein kinase superfamily. Ser/Thr protein kinase family. Aurora subfamily. Part of a complex composed of NEDD9, AURKA and CTTN; within the complex NEDD9 acts as a scaffold protein and is required for complex formation. Identified in a complex with AUNIP and NIN. Interacts with FBXL7. Interacts with CPEB1, JTB, TACC1, TPX2, PPP2CA, as well as with the protein phosphatase type 1 (PP1) isoforms PPP1CA, PPP1CB and PPP1CC. Also interacts with its substrates ARHGEF2, BORA, KIF2A, PARD3, and p53/TP53. Interaction with BORA promotes phosphorylation of PLK1. Interacts with CIMAP3. Interacts with GADD45A, competing with its oligomerization. Interacts (via C-terminus) with AUNIP (via C-terminus). Interacts with FRY; this interaction facilitates AURKA-mediated PLK1 phosphorylation. Interacts with SIRT2. Interacts with MYCN; interaction is phospho-independent and triggers AURKA activation; AURKA competes with FBXW7 for binding to unphosphorylated MYCN but not for binding to phosphorylated MYCN. Interacts with HNRNPU. Interacts with AAAS. Interacts with KLHL18 and CUL3. Interacts with FOXP1. Interacts with HDAC6; AURKA-mediated phosphorylation of HDAC6 promotes deacetylation of alpha-tubulin. Post-translationally, activated by phosphorylation at Thr-289; this brings about a change in the conformation of the activation segment. Phosphorylation at Thr-289 varies during the cell cycle and is highest during M phase. Autophosphorylated at Thr-289 upon TPX2 binding. Thr-289 can be phosphorylated by several kinases, including PAK and PKA. Protein phosphatase type 1 (PP1) binds AURKA and inhibits its activity by dephosphorylating Thr-289 during mitosis. Phosphorylation at Ser-343 decreases the kinase activity. PPP2CA controls degradation by dephosphorylating Ser-52 at the end of mitosis. In terms of processing, ubiquitinated by the E3 ubiquitin-protein ligase complex SCF(FBXL7) during mitosis, leading to its degradation by the proteasome. Ubiquitinated by CHFR, leading to its degradation by the proteasome. Ubiquitinated by the anaphase-promoting complex (APC), leading to its degradation by the proteasome. Ubiquitinated by the CUL3-KLHL18 ligase leading to its activation at the centrosome which is required for initiating mitotic entry. Ubiquitination mediated by CUL3-KLHL18 ligase does not lead to its degradation by the proteasome.

It is found in the cytoplasm. It localises to the cytoskeleton. The protein resides in the microtubule organizing center. Its subcellular location is the centrosome. The protein localises to the spindle pole. It is found in the centriole. It localises to the cell projection. The protein resides in the neuron projection. Its subcellular location is the cilium. The protein localises to the cilium basal body. It is found in the basolateral cell membrane. The enzyme catalyses L-seryl-[protein] + ATP = O-phospho-L-seryl-[protein] + ADP + H(+). It carries out the reaction L-threonyl-[protein] + ATP = O-phospho-L-threonyl-[protein] + ADP + H(+). Activation of CDK1, appears to be an upstream event of AURKA activation. Phosphatase inhibitor-2 (PPP1R2) and TPX2 act also as activators. Inactivated by the G2 checkpoint. Inhibited by GADD45A and p53/TP53, and through dephosphorylation by protein phosphatase type 1 (PP1). MLN8054 is also a potent and selective inhibitor. Activated during the early phase of cilia disassembly in the presence of CIMAP3. Inhibited by the small molecule inhibitor VX-680. Functionally, mitotic serine/threonine kinase that contributes to the regulation of cell cycle progression. Associates with the centrosome and the spindle microtubules during mitosis and plays a critical role in various mitotic events including the establishment of mitotic spindle, centrosome duplication, centrosome separation as well as maturation, chromosomal alignment, spindle assembly checkpoint, and cytokinesis. Required for normal spindle positioning during mitosis and for the localization of NUMA1 and DCTN1 to the cell cortex during metaphase. Required for initial activation of CDK1 at centrosomes. Phosphorylates numerous target proteins, including ARHGEF2, BORA, BRCA1, CDC25B, DLGP5, HDAC6, KIF2A, LATS2, NDEL1, PARD3, PPP1R2, PLK1, RASSF1, TACC3, p53/TP53 and TPX2. Phosphorylates MCRS1 which is required for MCRS1-mediated kinetochore fiber assembly and mitotic progression. Regulates KIF2A tubulin depolymerase activity. Important for microtubule formation and/or stabilization. Required for normal axon formation. Plays a role in microtubule remodeling during neurite extension. Also acts as a key regulatory component of the p53/TP53 pathway, and particularly the checkpoint-response pathways critical for oncogenic transformation of cells, by phosphorylating and destabilizing p53/TP53. Phosphorylates its own inhibitors, the protein phosphatase type 1 (PP1) isoforms, to inhibit their activity. Inhibits cilia outgrowth. Required for cilia disassembly via phosphorylation of HDAC6 and subsequent deacetylation of alpha-tubulin. Regulates protein levels of the anti-apoptosis protein BIRC5 by suppressing the expression of the SCF(FBXL7) E3 ubiquitin-protein ligase substrate adapter FBXL7 through the phosphorylation of the transcription factor FOXP1. The chain is Aurora kinase A from Canis lupus familiaris (Dog).